Consider the following 417-residue polypeptide: Diaminopimelate decarboxylase (417 aa).

At Lys61 the chain carries N6-(pyridoxal phosphate)lysine. Pyridoxal 5'-phosphate is bound by residues Gly240 and 275–278 (EPGR). Positions 278, 314, and 318 each coordinate substrate. The active-site Proton donor is the Cys344. Substrate contacts are provided by Glu345 and Tyr372. Tyr372 contacts pyridoxal 5'-phosphate.

This sequence belongs to the Orn/Lys/Arg decarboxylase class-II family. LysA subfamily. Homodimer. Pyridoxal 5'-phosphate serves as cofactor.

It catalyses the reaction meso-2,6-diaminopimelate + H(+) = L-lysine + CO2. It functions in the pathway amino-acid biosynthesis; L-lysine biosynthesis via DAP pathway; L-lysine from DL-2,6-diaminopimelate: step 1/1. Specifically catalyzes the decarboxylation of meso-diaminopimelate (meso-DAP) to L-lysine. The chain is Diaminopimelate decarboxylase (lysA) from Vibrio cholerae serotype O1 (strain ATCC 39315 / El Tor Inaba N16961).